A 395-amino-acid chain; its full sequence is MAKAKFERSKPHVNIGTIGHVDHGKTTLTAAITTVLAKAGGAEARGYDQIDAAPEERERGITISTAHVEYETETRHYAHVDCPGHADYVKNMITGAAQMDGGILVVSAADGPMPQTREHILLSRQVGVPYIVVFLNKCDMVDDEELLELVEMEVRDLLSEYGFPGDDIPVIKGSALKALQGEADWEAKIIELMAEVDAYIPTPERETDKPFLMPVEDVFSITGRGTVATGRVERGIVKVGDVVEIIGLAEENASTTVTGVEMFRKLLDQAQAGDNIGALLRGVAREDIQRGQVLAKSGSVKAHAKFKAEVFVLSKEEGGRHTPFFANYRPQFYFRTTDVTGIIQLPEGTEMVMPGDNVEMTIELIAPIAIEEGTKFSIREGGRTVGYGVVATIVE.

A tr-type G domain is found at 10-204; it reads KPHVNIGTIG…EVDAYIPTPE (195 aa). Residues 19 to 26 are G1; it reads GHVDHGKT. Residue 19-26 coordinates GTP; sequence GHVDHGKT. Thr-26 contacts Mg(2+). The interval 60–64 is G2; the sequence is GITIS. The tract at residues 81-84 is G3; sequence DCPG. Residues 81–85 and 136–139 each bind GTP; these read DCPGH and NKCD. A G4 region spans residues 136–139; sequence NKCD. Positions 174 to 176 are G5; it reads SAL.

The protein belongs to the TRAFAC class translation factor GTPase superfamily. Classic translation factor GTPase family. EF-Tu/EF-1A subfamily. In terms of assembly, monomer.

It localises to the cytoplasm. It catalyses the reaction GTP + H2O = GDP + phosphate + H(+). GTP hydrolase that promotes the GTP-dependent binding of aminoacyl-tRNA to the A-site of ribosomes during protein biosynthesis. This is Elongation factor Tu from Bacillus cereus (strain ATCC 10987 / NRS 248).